Reading from the N-terminus, the 632-residue chain is tRNA-guanine(15) transglycosylase (632 aa).

The active-site Nucleophile is the Asp86. The substrate site is built by Asp121 and Gly186. The PUA domain maps to 553–628 (NLRVFVKNES…IAVKIHEGRD (76 aa)).

Belongs to the archaeosine tRNA-ribosyltransferase family. The cofactor is Zn(2+).

It carries out the reaction guanosine(15) in tRNA + 7-cyano-7-deazaguanine = 7-cyano-7-carbaguanosine(15) in tRNA + guanine. It participates in tRNA modification; archaeosine-tRNA biosynthesis. Its function is as follows. Exchanges the guanine residue with 7-cyano-7-deazaguanine (preQ0) at position 15 in the dihydrouridine loop (D-loop) of archaeal tRNAs. In Thermoplasma volcanium (strain ATCC 51530 / DSM 4299 / JCM 9571 / NBRC 15438 / GSS1), this protein is tRNA-guanine(15) transglycosylase.